Here is a 401-residue protein sequence, read N- to C-terminus: Probable sodium/metabolite cotransporter BASS5, chloroplastic (401 aa).

Residues 1 to 46 constitute a chloroplast transit peptide; that stretch reads MAPNAAVLVRPHIAGVHHLPTGRRLPRLAPPQAVSPPFSRQKGSVV. 9 helical membrane-spanning segments follow: residues 93–113, 122–142, 159–179, 185–205, 215–235, 247–267, 273–293, 299–319, and 372–392; these read TIIPHVVLGSTILALVYPPSF, APALGFLMFAVGVNSSVKDFI, FIIKPFLGFLFGTLAVTIFNL, AGIMLVSCVSGAQLSNYATFL, IVMTSLSTATAVFVTPTLSYF, GMMSSIVQIVVAPIAAGLLLN, LCSAIQPFLPPLSVFVTALCV, INIKAVLSPFGLATVLLLFAF, and LVGVPPAISVVLMSLMGFALV.

Belongs to the bile acid:sodium symporter (BASS) (TC 2.A.28) family.

It localises to the membrane. It is found in the plastid. Its subcellular location is the chloroplast envelope. Its function is as follows. May function as sodium-coupled metabolite transporter across the chloroplast envelope. In Oryza sativa subsp. indica (Rice), this protein is Probable sodium/metabolite cotransporter BASS5, chloroplastic (BASS5).